The sequence spans 386 residues: Heavy metal-associated isoprenylated plant protein 5 (386 aa).

Residues 1–16 (MGEVQEGPKVEQEKKP) are compositionally biased toward basic and acidic residues. Positions 1-40 (MGEVQEGPKVEQEKKPAATVVPVETTDGKPKSGGGDSAAA) are disordered. In terms of domain architecture, HMA 1 spans 49-112 (VSAFVYKVDM…KLEEKTKRKV (64 aa)). The a metal cation site is built by Cys60 and Cys63. The segment at 129–153 (VGEKKADGGDKEAAPPAPAPAAPKE) is disordered. Over residues 130–141 (GEKKADGGDKEA) the composition is skewed to basic and acidic residues. Positions 153-220 (ESVVPLKIRL…KLKRTVEPLV (68 aa)) constitute an HMA 2 domain. Residues Cys164 and Cys167 each coordinate a metal cation. Composition is skewed to basic and acidic residues over residues 223-245 (KKDD…KKEA) and 252-297 (EAKK…KKDG). The tract at residues 223 to 301 (KKDDGAAENK…EKKKDGGGVP (79 aa)) is disordered. Cys383 bears the Cysteine methyl ester mark. Cys383 is lipidated: S-farnesyl cysteine. Residues 384–386 (SVM) constitute a propeptide, removed in mature form.

The protein belongs to the HIPP family. Post-translationally, efficiently farnesylated in vitro.

In terms of biological role, heavy-metal-binding protein. Involved in disease resistance. The sequence is that of Heavy metal-associated isoprenylated plant protein 5 from Arabidopsis thaliana (Mouse-ear cress).